We begin with the raw amino-acid sequence, 642 residues long: MSNSVNISVETTCENQIREIGYDGTELYQPPPTLSESLAKCAARIDFSKTSLDDLKKEEKSAAAAADEDKDATQFQESLWPWDAVRNKLKDALTEICVLSDVISIAKDKRYLVLDPLLEEADDTKPIVQVYSRKKAISQAAQVLLSGAERLRNAHSEQRNRNVSDFHIELLRLRQNWRLKKVSNAIIGDLSYRTAGSKFGMSGTFEVTKAEETGDEDTASSSNSSSSVSGNNGMQLKASSALRVIVPAELQGVAYIKVITQKDQEDLCTAQLNLMGHGPNITAQVGVWQKTLEFAQNVLFCKELFAQLAREAIQLQAPIPHVVIGNQIRATLLPNIQLIISLCHSTTFDSSQPAPINDHDHVLEHSLHQLLREVHYKNSHHPFPHPASAPLGPTKKRMLAGPMAADRETLLDMTKSQTILEQIIAQAQHIFMRKRTQYVLDTLARDVKDPQIVSHWNAMNSPTMSCVKINIVTHGYDAIGRTSLVIHVKERSLKCICRDGRVMRLSYEPQELRDLILCQINSHQISCLISLARCMSWTVLSNSNHLGIGKVEPLGNASSCLLASPNSDRMIAVQIRCDPQIDVKVYIARSPRQDFFPSPLVPEKLWENLGGTFKEVRFDKIEGKSFLNKMEFLMASLTSNTA.

Positions 210–232 are disordered; sequence AEETGDEDTASSSNSSSSVSGNN. A compositionally biased stretch (low complexity) spans 220–232; the sequence is SSSNSSSSVSGNN.

Belongs to the Mediator complex subunit 17 family. In terms of assembly, component of the Mediator complex, which includes at least CDK8, MED4, MED6, MED11, MED14, MED17, MED18, MED20, MED21, MED22, MED27, MED28, MED30 and MED31. Interacts with Hsf.

The protein resides in the nucleus. The protein localises to the chromosome. Component of the Mediator complex, a coactivator involved in the regulated transcription of nearly all RNA polymerase II-dependent genes. Mediator functions as a bridge to convey information from gene-specific regulatory proteins to the basal RNA polymerase II transcription machinery. Mediator is recruited to promoters by direct interactions with regulatory proteins and serves as a scaffold for the assembly of a functional preinitiation complex with RNA polymerase II and the general transcription factors. Required for activated transcription of the MtnA, MtnB and MtnD genes. Negatively regulates sex comb development. This is Mediator of RNA polymerase II transcription subunit 17 (MED17) from Drosophila melanogaster (Fruit fly).